The chain runs to 268 residues: Thiazole synthase (268 aa).

Lysine 100 acts as the Schiff-base intermediate with DXP in catalysis. 1-deoxy-D-xylulose 5-phosphate is bound by residues glycine 161, 187–188 (AG), and 209–210 (NT). The disordered stretch occupies residues 248–268 (ATPSSPSEGMITGSPHSAANN).

This sequence belongs to the ThiG family. As to quaternary structure, homotetramer. Forms heterodimers with either ThiH or ThiS.

The protein localises to the cytoplasm. It carries out the reaction [ThiS sulfur-carrier protein]-C-terminal-Gly-aminoethanethioate + 2-iminoacetate + 1-deoxy-D-xylulose 5-phosphate = [ThiS sulfur-carrier protein]-C-terminal Gly-Gly + 2-[(2R,5Z)-2-carboxy-4-methylthiazol-5(2H)-ylidene]ethyl phosphate + 2 H2O + H(+). Its pathway is cofactor biosynthesis; thiamine diphosphate biosynthesis. Catalyzes the rearrangement of 1-deoxy-D-xylulose 5-phosphate (DXP) to produce the thiazole phosphate moiety of thiamine. Sulfur is provided by the thiocarboxylate moiety of the carrier protein ThiS. In vitro, sulfur can be provided by H(2)S. In Nitrosomonas eutropha (strain DSM 101675 / C91 / Nm57), this protein is Thiazole synthase.